We begin with the raw amino-acid sequence, 292 residues long: Protoheme IX farnesyltransferase (292 aa).

The next 9 helical transmembrane spans lie at 12–32 (ITWLILMSTGIGYFFGLPQAS), 43–63 (LLRLLHTIIGTGLIASGTAAL), 94–114 (LAFGVALSIAGFVELWLGVNL), 115–135 (LSAGIGAFTLASYLFLYTPMK), 144–164 (VGAIPGAMPPVIGFAAAAGGL), 169–189 (WVLFAILFLWQFPHFYSIAWM), 216–236 (IVIYGIALIPVSLVPALLGMS), 239–259 (LYLVGALLLGLWFLYSGVRVA), and 267–287 (ARGVLITSVLYLPLIYGLMLL).

Belongs to the UbiA prenyltransferase family. Protoheme IX farnesyltransferase subfamily.

It localises to the cell inner membrane. The enzyme catalyses heme b + (2E,6E)-farnesyl diphosphate + H2O = Fe(II)-heme o + diphosphate. It functions in the pathway porphyrin-containing compound metabolism; heme O biosynthesis; heme O from protoheme: step 1/1. Converts heme B (protoheme IX) to heme O by substitution of the vinyl group on carbon 2 of heme B porphyrin ring with a hydroxyethyl farnesyl side group. This chain is Protoheme IX farnesyltransferase, found in Solibacter usitatus (strain Ellin6076).